The primary structure comprises 885 residues: Exosome complex component 10 (885 aa).

The segment covering 1-10 (MAPPSPREHQ) has biased composition (basic and acidic residues). Disordered regions lie at residues 1 to 23 (MAPP…PDAE) and 210 to 232 (KPLP…EDLD). A Glycyl lysine isopeptide (Lys-Gly) (interchain with G-Cter in SUMO2) cross-link involves residue Lys19. Basic and acidic residues predominate over residues 217–230 (SKERRERPQDRPED). The 3'-5' exonuclease domain maps to 289-455 (HVVSSLDELV…YIYDRMRLEL (167 aa)). Mg(2+)-binding residues include Asp313, Glu315, Asp371, and Asp440. Residues 503-583 (NSQQLTAFQL…QQAREMPLLK (81 aa)) form the HRDC domain. Lys583 participates in a covalent cross-link: Glycyl lysine isopeptide (Lys-Gly) (interchain with G-Cter in SUMO1); alternate. Lys583 participates in a covalent cross-link: Glycyl lysine isopeptide (Lys-Gly) (interchain with G-Cter in SUMO2); alternate. Residue Lys710 forms a Glycyl lysine isopeptide (Lys-Gly) (interchain with G-Cter in SUMO2) linkage. The segment at 730-885 (VQKEPKEAAK…RGFRHNWPKR (156 aa)) is disordered. Composition is skewed to basic and acidic residues over residues 732–756 (KEPK…KEES) and 776–794 (ATKK…EQKQ). At Ser821 the chain carries Phosphoserine. Residues Lys833, Lys859, and Lys873 each participate in a glycyl lysine isopeptide (Lys-Gly) (interchain with G-Cter in SUMO2) cross-link.

The protein belongs to the exosome component 10/RRP6 family. In terms of assembly, component of the RNA exosome complex. The catalytically inactive RNA exosome core complex (Exo-9) associates with the catalytic subunit EXOSC10/RRP6 (via its N-terminus). Exo-9 may associate with DIS3 to form the nucleolar exosome complex, or DIS3L to form the cytoplasmic exosome complex. The RNA exosome complex interacts with cofactors C1D/RRP47, MPHOSPH6/MPP6 and MTREX/MTR4. Interacts with MTREX; the interaction with MTREX mediates the association of MTREX with nuclear RNA exosomes. Part of the small subunit (SSU) processome, composed of more than 70 proteins and the RNA chaperone small nucleolar RNA (snoRNA) U3. Interacts with ALYREF/THOC4. Interacts with DHX36; this interaction occurs in a RNase-insensitive manner. Interacts with NRDE2. Interacts (via C-terminus) with USP36 (via C-terminus); the interaction is facilitated by the association with RNA and promotes sumoylation of EXOSC10. Mg(2+) serves as cofactor. In terms of processing, sumoylated by USP36; sumoylation does not significantly affect EXOSC10 nucleolar localization and association with core exosome and USP36, but regulates the nucleolar RNA exosome activity in rRNA processing by promoting binding of EXOSC10 to pre-rRNAs. Effects of sumoylation on EXOSC10 levels vary between different studies. Sumoylation of EXOSC10 is required for the modulation of EXOSC10 effects on cellular protein translation and cell proliferation. Sumoylation is promoted by mild hypothermia. In terms of tissue distribution, expressed in testis (at protein level).

Its subcellular location is the cytoplasm. The protein resides in the nucleus. It is found in the nucleolus. The protein localises to the nucleoplasm. Functionally, catalytic component of the RNA exosome complex which has 3'-&gt;5' exoribonuclease activity and participates in a multitude of cellular RNA processing and degradation events. In the nucleus, the RNA exosome complex is involved in proper maturation of stable RNA species such as rRNA, snRNA and snoRNA, in the elimination of RNA processing by-products and non-coding 'pervasive' transcripts, such as antisense RNA species and promoter-upstream transcripts (PROMPTs), and of mRNAs with processing defects, thereby limiting or excluding their export to the cytoplasm. Part of the small subunit (SSU) processome, first precursor of the small eukaryotic ribosomal subunit. During the assembly of the SSU processome in the nucleolus, many ribosome biogenesis factors, an RNA chaperone and ribosomal proteins associate with the nascent pre-rRNA and work in concert to generate RNA folding, modifications, rearrangements and cleavage as well as targeted degradation of pre-ribosomal RNA by the RNA exosome. The RNA exosome may be involved in Ig class switch recombination (CSR) and/or Ig variable region somatic hypermutation (SHM) by targeting AICDA deamination activity to transcribed dsDNA substrates. In the cytoplasm, the RNA exosome complex is involved in general mRNA turnover and specifically degrades inherently unstable mRNAs containing AU-rich elements (AREs) within their 3' untranslated regions, and in RNA surveillance pathways, preventing translation of aberrant mRNAs. It seems to be involved in degradation of histone mRNA. EXOSC10 is required for nucleolar localization of C1D and probably mediates the association of MTREX, C1D and MPHOSPH6 with the RNA exosome involved in the maturation of 5.8S rRNA. Plays a role in the recruitment of replication protein A complex (RPA) and RAD51 to DNA double-strand breaks caused by irradiation, contributing to DNA repair by homologous recombination. Regulates levels of damage-induced RNAs in order to prevent DNA-RNA hybrid formation at DNA double-strand breaks and limit DNA end resection after damage. Plays a role in oocyte development, maturation and survival. Required for normal testis development and mitotic division of spermatogonia. Plays a role in proper embryo development. Required for global protein translation. Required for cell proliferation. The protein is Exosome complex component 10 of Rattus norvegicus (Rat).